We begin with the raw amino-acid sequence, 377 residues long: Virion membrane protein A16 (377 aa).

A lipid anchor (N-myristoyl glycine; by host) is attached at G2. Residues G2–T341 are Virion surface-facing. The chain crosses the membrane as a helical; Signal-anchor for type II membrane protein span at residues W342 to Y362. At S363–R377 the chain is on the intravirion side.

Belongs to the poxviridae A16/G9/J5 family. In terms of assembly, part of a stable entry-fusion complex (EFC) which is at least composed of proteins A16, A21, A28, G3, G9, H2, J5, and L5. Formation of the viral membrane is necessary for the assembly of the complex. Interacts with G9. In terms of processing, most cysteines are linked by disulfide bonds. They are created by the viral disulfide bond formation pathway, a poxvirus-specific redox pathway that operates on the cytoplasmic side of the MV membranes.

The protein resides in the virion membrane. In terms of biological role, envelope protein part of the entry-fusion complex responsible for the virus membrane fusion with host cell membrane during virus entry. Also plays a role in cell-cell fusion (syncytium formation). The polypeptide is Virion membrane protein A16 (Homo sapiens (Human)).